Consider the following 418-residue polypeptide: Homeobox protein H2.0 (418 aa).

Basic residues predominate over residues 190 to 216 (QHQKQQHQQHHHHQHHPKHLHQQHKPP). Disordered stretches follow at residues 190–223 (QHQK…STTA), 259–296 (TSPA…RKRS), and 354–418 (RENL…NVVE). Residues 259–273 (TSPAAAAAATSQNGA) are compositionally biased toward low complexity. Residues 295–354 (RSWSRAVFSNLQRKGLEIQFQQQKYITKPDRRKLAARLNLTDAQVKVWFQNRRMKWRHTR) constitute a DNA-binding region (homeobox). The span at 391–403 (DYSSDSCSSVDLS) shows a compositional bias: low complexity.

The protein belongs to the H2.0 homeobox family. In terms of tissue distribution, expressed in cells of the visceral musculature and its anlagen.

It is found in the nucleus. Functionally, may play a role in pattern formation during embryonic and imaginal development. Is not essential for visceral muscle morphogenesis. The polypeptide is Homeobox protein H2.0 (H2.0) (Drosophila melanogaster (Fruit fly)).